The sequence spans 1118 residues: MVSSILKFVILIHSTFHSTFAQNLPDTTVAPKTKRTIKIGIAAAQRTQTSSIGWSVCGGAVPMAIERLREFGYVKDFDFEFIVDYTECDQGSVVRAGIEFIKTHKVDVIIGPPCAQALRVMSFLAENYKKPVLGWGFVSDTDLSDVIRFPYLTTVIPNSLMLGYAASKMLTVYNWGRVAMLYYYSDIKYCSGVMNDVEATFNNPSTPNVNIVIKAEIYLNDNETTDIVFQSVKSRARIIFWCTQTAIEKRDYLIKIATHDMIGDEYVHIMLSMRNIAFGAQTSLGKPTFSQSGLTPIWESFTEGTDDFEKMVKQAATRMFVLDVNSEVADKKYLDYLQKNIMKAVQSPPMNCSTVECMTANTTIMGGYARQLFDVVYLYGVALTNTNSTDPAVYDDVDVIVPQFVTSFQGMTGKVVISPNLTRMPIFQLYGLNSDYEQVALAEFTYIDPIMNVTLSYKEEGGAVWYFYGNSRPLDIPICGFLGKFCPISFWEQYMILAIVSISVIVLMVIIMIIGCLCVISAKHAEQARTNAEWQVPFVNLMESEKQIRSNATSRRSLQSAPSISTGHSGVTTVSDFCENYTMMMYEKEMVLTAKYQYTHLTKADKERFVKMRKLDHENINRFIGLSIDSAHFIAVTKLCSRGSLQDILSRGNFSMDYFFMFCIIRDVAKGLEYLHKTFLRLHGNLRSATCLVNDSWQVKLAEYGMDNLVEEQTPPKKRLLWVAPEVLRGSLSVSQMEPSADIYSFAIIASEILTKKEAWDILDRKEDCEALIALVKDCWAEVPEDRPTAENICSQMKGLVSKQKTNLMDHVFNMLEEYTSTLEEEIEERTKELTLEKKKADILLSRMLPKQVAERLKAGQTVEPEGFDSVTVFFSDVVKFTILASKCSPFQTVNLLNDLYSNFDTIIEQHGVYKVESIGDGYLCVSGLPTRNGYAHIKQIVDMSLKFMEYCRSFKIPHLPRENVELRIGVNSGPCVAGVVGLSMPRYCLFGDTVNTASRMESNGKPSLIHLTSDAHLLLLTHYPNHYDTSSRGEVIIKGKGVMETFWVHGRIDDIAEPTELRSICKPSTVANERWITPPAPKPEIRSVSSHGSRPPSVYDPLQDHRKFKMDTLKVAN.

Residues 1 to 21 form the signal peptide; sequence MVSSILKFVILIHSTFHSTFA. Residues 22–494 lie on the Extracellular side of the membrane; sequence QNLPDTTVAP…FCPISFWEQY (473 aa). N-linked (GlcNAc...) asparagine glycosylation is found at Asn-222, Asn-351, Asn-361, Asn-387, Asn-420, and Asn-452. The helical transmembrane segment at 495-515 threads the bilayer; it reads MILAIVSISVIVLMVIIMIIG. Over 516–1118 the chain is Cytoplasmic; it reads CLCVISAKHA…FKMDTLKVAN (603 aa). Positions 558 to 875 constitute a Protein kinase domain; sequence LQSAPSISTG…EGFDSVTVFF (318 aa). In terms of domain architecture, Guanylate cyclase spans 872-1002; sequence TVFFSDVVKF…DTVNTASRME (131 aa). Residues 1076–1103 are disordered; sequence WITPPAPKPEIRSVSSHGSRPPSVYDPL.

This sequence belongs to the adenylyl cyclase class-4/guanylyl cyclase family. In terms of tissue distribution, expressed bilaterally in AWA and ASI sensory neurons and in RIA and PVT interneurons.

The protein localises to the cell membrane. It carries out the reaction GTP = 3',5'-cyclic GMP + diphosphate. Functionally, guanylate cyclase involved in the production of the second messenger cGMP. The protein is Receptor-type guanylate cyclase gcy-2 of Caenorhabditis elegans.